The following is a 230-amino-acid chain: Potassium/proton antiporter CemA (230 aa).

4 consecutive transmembrane segments (helical) span residues 7–27 (LPSLLYLVFIVLLPWGVSSSF), 106–126 (IILHFSTNIICLAILSGSFFL), 145–165 (LNDSIKAFFILLVTDFFVGFH), and 181–201 (FGWAPNELIFTIFVCSFPVIL).

It belongs to the CemA family.

The protein resides in the plastid. It is found in the chloroplast inner membrane. It carries out the reaction K(+)(in) + H(+)(out) = K(+)(out) + H(+)(in). In terms of biological role, contributes to K(+)/H(+) antiport activity by supporting proton efflux to control proton extrusion and homeostasis in chloroplasts in a light-dependent manner to modulate photosynthesis. Prevents excessive induction of non-photochemical quenching (NPQ) under continuous-light conditions. Indirectly promotes efficient inorganic carbon uptake into chloroplasts. This is Potassium/proton antiporter CemA from Hordeum vulgare (Barley).